The primary structure comprises 412 residues: Adherens junction-associated protein 1 (412 aa).

Residues 1–43 form the signal peptide; sequence MWIQQLLGLSSMSIRWPGRSLGSHAWILIAMLQLAVDFPSCDS. The Extracellular portion of the chain corresponds to 44–284; the sequence is LGPGPEFRLL…GETSGLAVHQ (241 aa). 2 disordered regions span residues 62 to 175 and 243 to 271; these read LWSL…GRPT and DPWK…IQPP. Residues 121–146 are compositionally biased toward low complexity; sequence PPAATRSSPSLASATASSSIVTAGAA. Basic and acidic residues predominate over residues 160–171; the sequence is HDTEFNDFDFRG. The segment covering 248 to 263 has biased composition (low complexity); the sequence is TPVGVSTTEPSTSPSS. A helical transmembrane segment spans residues 285-305; sequence IITITVSLIMVIAALITTLVL. Residues 305-412 form a targeting signals region; that stretch reads LKNCCAPSGH…VSEKWFEISC (108 aa). Over 306-412 the chain is Cytoplasmic; sequence KNCCAPSGHT…VSEKWFEISC (107 aa).

Forms a complex with CDH1 and CTNNB1; interacts directly with CTNNB1. Interacts with AP1M2 and isoform 2 of BSG/CD147.

It localises to the basolateral cell membrane. It is found in the apical cell membrane. Its subcellular location is the cell junction. The protein resides in the adherens junction. Functionally, plays a role in cell adhesion and cell migration. This is Adherens junction-associated protein 1 (Ajap1) from Mus musculus (Mouse).